Here is a 409-residue protein sequence, read N- to C-terminus: MRLKKTLLSIAIAAATFTPAMHSIAAPLQLQATLDQESQIQSSNTWLEIDLGQFKQNIEQFKSHMNDQTKICAVMKADAYGNGIAGLMPTIIEQQIPCVAIASNAEAQVVRDSGFKGQLMRVRSAEIGEIEGALDLNVEELIGTLDQAKAIAALSKKANKTVKVHLALNDGGMGRNGIDMTTENGKKEALAIAKQSGVEIVGIMTHFPNYNAEEVRAKLGSFKESSAWLIKEANLKREDILLHVANSYTALNVPEAQLDMVRPGGVLYGDLPTNLEYPSIVSFKTRVASLHHLPKNSTVGYDSSFTTTKESVMANLPVGYSDGYPRKMGNTADVLINGQRAKVVGVTSMNTTMIDVSDIKGVKPGSEVVLFGNQKSQTINAAEIEKNADVIFPELYTIWGTSNPRVYVK.

The first 25 residues, Met1–Ala25, serve as a signal peptide directing secretion. Cys72 and Cys98 form a disulfide bridge. Lys76 functions as the Proton acceptor in the catalytic mechanism. The residue at position 76 (Lys76) is an N6-(pyridoxal phosphate)lysine. A substrate-binding site is contributed by Arg175. Catalysis depends on Tyr301, which acts as the Proton acceptor. Met349 provides a ligand contact to substrate.

The protein belongs to the alanine racemase family. Bsr subfamily. Requires pyridoxal 5'-phosphate as cofactor.

The protein resides in the periplasm. The catalysed reaction is an L-alpha-amino acid = a D-alpha-amino acid. It carries out the reaction L-lysine = D-lysine. It catalyses the reaction L-arginine = D-arginine. In terms of biological role, amino-acid racemase able to utilize a broad range of substrates. The chain is Broad specificity amino-acid racemase from Vibrio parahaemolyticus serotype O3:K6 (strain RIMD 2210633).